A 104-amino-acid polypeptide reads, in one-letter code: Large ribosomal subunit protein uL24 (104 aa).

It belongs to the universal ribosomal protein uL24 family. In terms of assembly, part of the 50S ribosomal subunit.

In terms of biological role, one of two assembly initiator proteins, it binds directly to the 5'-end of the 23S rRNA, where it nucleates assembly of the 50S subunit. Functionally, one of the proteins that surrounds the polypeptide exit tunnel on the outside of the subunit. The sequence is that of Large ribosomal subunit protein uL24 from Caulobacter vibrioides (strain ATCC 19089 / CIP 103742 / CB 15) (Caulobacter crescentus).